A 161-amino-acid chain; its full sequence is MSMDTANNDQGTDLGKVIDISRIIQMIPHRYPFLMVDRVVQVVANESAVGIKNVTINEPFFQGHFPSRPVFPGVLIIESMAQTAAVLVVETLGESAEGKLVYFMSVENCRFRKPVGPGDQLMIHVFKERSRGNVWKFRGEAKVDGVLVAEATYAAMILDEK.

H64 is a catalytic residue.

This sequence belongs to the thioester dehydratase family. FabZ subfamily.

The protein localises to the cytoplasm. The enzyme catalyses a (3R)-hydroxyacyl-[ACP] = a (2E)-enoyl-[ACP] + H2O. Involved in unsaturated fatty acids biosynthesis. Catalyzes the dehydration of short chain beta-hydroxyacyl-ACPs and long chain saturated and unsaturated beta-hydroxyacyl-ACPs. This Paramagnetospirillum magneticum (strain ATCC 700264 / AMB-1) (Magnetospirillum magneticum) protein is 3-hydroxyacyl-[acyl-carrier-protein] dehydratase FabZ.